Here is a 62-residue protein sequence, read N- to C-terminus: Calmodulin regulator protein PCP4 (62 aa).

Residues 1 to 39 (MSERQSAGATNGKDKTSGDNDGQKKVQEEFDIDMDAPET) form a disordered region. The span at 12 to 28 (GKDKTSGDNDGQKKVQE) shows a compositional bias: basic and acidic residues. The acidic; binds calcium and is required for modulating the calcium-binding kinetics of calmodulin stretch occupies residues 28-40 (EEFDIDMDAPETE). The IQ domain occupies 39–62 (TERAAVAIQSQFRKFQKKKAGSQS).

The protein belongs to the PCP4 family. In terms of assembly, binds to both calcium-free and calcium-bound calmodulin. The affinity for the calcium-bound form is 50-fold greater.

Functionally, functions as a modulator of calcium-binding by calmodulin. Thereby, regulates calmodulin activity and the different processes it controls. For instance, may play a role in neuronal differentiation through activation of calmodulin-dependent kinase signaling pathways. The sequence is that of Calmodulin regulator protein PCP4 from Mus musculus (Mouse).